A 373-amino-acid chain; its full sequence is MTTAGIDLQLGFETALQNLGLSPGAAHALWVPLPMLLMVIAATLGVMVMTWLERKISAAAQQRIGPNMAGPQGVLIPIADGIKLLTKEDVLPSLADPVLFTLGPILVFLPVFLCYLVVPFGQNLLISNIAIGVFFLIATSSVQPIGLLMSGYGSNNKYSLLGGLRAAAQSISYELPLALSVLAVVLMSNGLDTVGIVEQQSGLGILSWNVWRQPIGFVIFLISALAETERIPFDLPEAEEELVAGYQTEYSGMKFALFYLGSYANLLLASLIAAVLYLGGWSFVVPVETIAAWLGIPLDNPFLQIGAAVLGILMTMVKAFIFVFLAILLRWTLPRVRIDQLLDLGWKFLLPVSFVNLLLTAALKLAFPTFFGG.

The next 9 helical transmembrane spans lie at 29–49 (LWVPLPMLLMVIAATLGVMVM), 64–84 (IGPNMAGPQGVLIPIADGIKL), 98–118 (VLFTLGPILVFLPVFLCYLVV), 129–149 (IAIGVFFLIATSSVQPIGLLM), 177–197 (LALSVLAVVLMSNGLDTVGIV), 202–222 (GLGILSWNVWRQPIGFVIFLI), 267–287 (LLASLIAAVLYLGGWSFVVPV), 309–329 (VLGILMTMVKAFIFVFLAILL), and 348–368 (FLLPVSFVNLLLTAALKLAFP).

The protein belongs to the complex I subunit 1 family. In terms of assembly, NDH-1 is composed of at least 11 different subunits.

It localises to the cellular thylakoid membrane. The enzyme catalyses a plastoquinone + NADH + (n+1) H(+)(in) = a plastoquinol + NAD(+) + n H(+)(out). The catalysed reaction is a plastoquinone + NADPH + (n+1) H(+)(in) = a plastoquinol + NADP(+) + n H(+)(out). NDH-1 shuttles electrons from an unknown electron donor, via FMN and iron-sulfur (Fe-S) centers, to quinones in the respiratory and/or the photosynthetic chain. The immediate electron acceptor for the enzyme in this species is believed to be plastoquinone. Couples the redox reaction to proton translocation, and thus conserves the redox energy in a proton gradient. This Synechococcus sp. (strain JA-3-3Ab) (Cyanobacteria bacterium Yellowstone A-Prime) protein is NAD(P)H-quinone oxidoreductase subunit 1.